A 456-amino-acid polypeptide reads, in one-letter code: GTPase Der (456 aa).

EngA-type G domains lie at 4–169 (PVVA…PSKD) and 178–353 (VQLA…DQSR). GTP contacts are provided by residues 10–17 (GRPNVGKS), 57–61 (DTGGL), 120–123 (NKCE), 184–191 (GRPNVGKS), 231–235 (DTAGI), and 296–299 (NKWD). One can recognise a KH-like domain in the interval 354–439 (RRVTTSVVNE…PIKLFWRGKQ (86 aa)).

This sequence belongs to the TRAFAC class TrmE-Era-EngA-EngB-Septin-like GTPase superfamily. EngA (Der) GTPase family. As to quaternary structure, associates with the 50S ribosomal subunit.

Functionally, GTPase that plays an essential role in the late steps of ribosome biogenesis. The chain is GTPase Der from Prochlorococcus marinus (strain NATL2A).